A 444-amino-acid polypeptide reads, in one-letter code: Trigger factor (444 aa).

A PPIase FKBP-type domain is found at 165–250; it reads GDFAKFDFEG…LHEIQELKIP (86 aa).

It belongs to the FKBP-type PPIase family. Tig subfamily.

The protein resides in the cytoplasm. It catalyses the reaction [protein]-peptidylproline (omega=180) = [protein]-peptidylproline (omega=0). In terms of biological role, involved in protein export. Acts as a chaperone by maintaining the newly synthesized protein in an open conformation. Functions as a peptidyl-prolyl cis-trans isomerase. This is Trigger factor from Campylobacter jejuni subsp. jejuni serotype O:23/36 (strain 81-176).